Consider the following 116-residue polypeptide: Large ribosomal subunit protein uL18 (116 aa).

This sequence belongs to the universal ribosomal protein uL18 family. In terms of assembly, part of the 50S ribosomal subunit; part of the 5S rRNA/L5/L18/L25 subcomplex. Contacts the 5S and 23S rRNAs.

This is one of the proteins that bind and probably mediate the attachment of the 5S RNA into the large ribosomal subunit, where it forms part of the central protuberance. This Shewanella loihica (strain ATCC BAA-1088 / PV-4) protein is Large ribosomal subunit protein uL18.